The chain runs to 124 residues: Fluoride-specific ion channel FluC (124 aa).

Helical transmembrane passes span 4–24 (VLLV…ISIF), 35–55 (FGTL…YALG), 60–80 (ISPE…TTFS), and 95–115 (WLKA…MVYL). Na(+) is bound by residues G74 and T77.

This sequence belongs to the fluoride channel Fluc/FEX (TC 1.A.43) family.

The protein resides in the cell inner membrane. The catalysed reaction is fluoride(in) = fluoride(out). With respect to regulation, na(+) is not transported, but it plays an essential structural role and its presence is essential for fluoride channel function. Its function is as follows. Fluoride-specific ion channel. Important for reducing fluoride concentration in the cell, thus reducing its toxicity. The protein is Fluoride-specific ion channel FluC of Shewanella putrefaciens (strain CN-32 / ATCC BAA-453).